The chain runs to 238 residues: Probable transcriptional regulatory protein llmg_0242 (238 aa).

This sequence belongs to the TACO1 family. YeeN subfamily.

Its subcellular location is the cytoplasm. The polypeptide is Probable transcriptional regulatory protein llmg_0242 (Lactococcus lactis subsp. cremoris (strain MG1363)).